Here is a 275-residue protein sequence, read N- to C-terminus: Lacto-N-neotetraose biosynthesis glycosyltransferase LgtB (275 aa).

This sequence belongs to the glycosyltransferase 25 family.

Its pathway is glycan metabolism; lacto-N-neotetraose biosynthesis. The protein operates within bacterial outer membrane biogenesis; lipooligosaccharide biosynthesis. Its function is as follows. Adds the second galactose to the lacto-N-tetraose chain in lipooligosaccharide (LOS). The chain is Lacto-N-neotetraose biosynthesis glycosyltransferase LgtB (lgtB) from Neisseria meningitidis serogroup B (strain ATCC BAA-335 / MC58).